An 886-amino-acid polypeptide reads, in one-letter code: Protein O-mannosyltransferase 1 (886 aa).

Polar residues-rich tracts occupy residues 1 to 10 (MSATYTNTIT) and 18 to 34 (VRQQQQHQWTGSDLSGE). 2 disordered regions span residues 1-37 (MSATYTNTITQRRKTAKVRQQQQHQWTGSDLSGESNE) and 88-161 (RGSV…KTAN). The segment covering 105 to 139 (PTPVATPKQASPSPTSDRSRSLSRSPSPSRSRSLS) has biased composition (low complexity). Residues Asn-161 and Asn-242 are each glycosylated (N-linked (GlcNAc...) asparagine). The next 4 membrane-spanning stretches (helical) occupy residues 256 to 276 (MPIFWFRFLPAMCGSLLAPAV), 310 to 330 (VLMESMLLLATTVGIACLLRF), 349 to 369 (VCLGAAGTVKYVGFLALGLAF), and 398 to 418 (LLIFVGIPLAVYLGVFYIHFK). MIR domains follow at residues 450–511 (PLAV…VKRP), 522–579 (PDII…VEIL), and 585–642 (GDIW…VEEH). 3 helical membrane-spanning segments follow: residues 727–747 (ILLWYTATMGILVYAGLLAFY), 791–811 (LFLHNYLPAFVFKLLLLCFVV), and 835–855 (LMLILWLVGVLSIFSKFIPFS).

The protein belongs to the glycosyltransferase 39 family. Interacts with tw/POMT2. At the cellular blastoderm stage, expression accumulates in the ventrally located mesoderm primordium. At germ band extension, mesoderm expression is seen as stripes of strong expression. A very strong signal is also detected in the invaginating gut. As the germ band retracts, mesodermal expression decays and becomes restricted to somatic muscle precursors. After dorsal closure, expression has disappeared from the mesoderm and remains in the endoderm. Some expression is detected in a few cells of the head and the pharyngeal muscles.

The protein localises to the endoplasmic reticulum membrane. The catalysed reaction is a di-trans,poly-cis-dolichyl beta-D-mannosyl phosphate + L-seryl-[protein] = 3-O-(alpha-D-mannosyl)-L-seryl-[protein] + a di-trans,poly-cis-dolichyl phosphate + H(+). It carries out the reaction a di-trans,poly-cis-dolichyl beta-D-mannosyl phosphate + L-threonyl-[protein] = 3-O-(alpha-D-mannosyl)-L-threonyl-[protein] + a di-trans,poly-cis-dolichyl phosphate + H(+). It participates in protein modification; protein glycosylation. Functionally, rt/POMT1 and tw/POMT2 function as a protein O-mannosyltransferase in association with each other to generate and maintain normal muscle development. The polypeptide is Protein O-mannosyltransferase 1 (Drosophila melanogaster (Fruit fly)).